The following is a 57-amino-acid chain: uncharacterized protein (57 aa).

Belongs to the ycf18/nblA family.

Its subcellular location is the plastid. The protein localises to the chloroplast. This is an uncharacterized protein from Aglaothamnion neglectum (Red alga).